Here is a 134-residue protein sequence, read N- to C-terminus: Large ribosomal subunit protein uL18 (134 aa).

The disordered stretch occupies residues Met1–Arg25. Positions Asn7–Thr19 are enriched in basic and acidic residues.

This sequence belongs to the universal ribosomal protein uL18 family. Part of the 50S ribosomal subunit; part of the 5S rRNA/L5/L18/L25 subcomplex. Contacts the 5S and 23S rRNAs.

This is one of the proteins that bind and probably mediate the attachment of the 5S RNA into the large ribosomal subunit, where it forms part of the central protuberance. This Corynebacterium jeikeium (strain K411) protein is Large ribosomal subunit protein uL18.